A 349-amino-acid polypeptide reads, in one-letter code: tRNA pseudouridine synthase D (349 aa).

F27 contacts substrate. D80 functions as the Nucleophile in the catalytic mechanism. N129 provides a ligand contact to substrate. Residues 155 to 303 (GVPNYFGAQR…VEASRRAMLL (149 aa)) form the TRUD domain. F329 is a substrate binding site.

This sequence belongs to the pseudouridine synthase TruD family.

The catalysed reaction is uridine(13) in tRNA = pseudouridine(13) in tRNA. Its function is as follows. Responsible for synthesis of pseudouridine from uracil-13 in transfer RNAs. The polypeptide is tRNA pseudouridine synthase D (Salmonella newport (strain SL254)).